A 354-amino-acid polypeptide reads, in one-letter code: Methylthioribose-1-phosphate isomerase (354 aa).

Substrate is bound by residues 49–51 (RGA), arginine 92, and glutamine 199. The active-site Proton donor is aspartate 240. 250–251 (NK) is a binding site for substrate.

It belongs to the eIF-2B alpha/beta/delta subunits family. MtnA subfamily.

It catalyses the reaction 5-(methylsulfanyl)-alpha-D-ribose 1-phosphate = 5-(methylsulfanyl)-D-ribulose 1-phosphate. It participates in amino-acid biosynthesis; L-methionine biosynthesis via salvage pathway; L-methionine from S-methyl-5-thio-alpha-D-ribose 1-phosphate: step 1/6. Its function is as follows. Catalyzes the interconversion of methylthioribose-1-phosphate (MTR-1-P) into methylthioribulose-1-phosphate (MTRu-1-P). The protein is Methylthioribose-1-phosphate isomerase of Koribacter versatilis (strain Ellin345).